We begin with the raw amino-acid sequence, 125 residues long: MADLAKIVEDLSSLTVLEAAELSKMLEEKWGVSAAAPVAVAAAGGAAAPAAAAEEKTEFDVVLADAGAQKINVIKEVRAITGLGLKEAKDLVEGAPKPVKEGVAKDEAEKIKAQLEGAGAKVELK.

Belongs to the bacterial ribosomal protein bL12 family. As to quaternary structure, homodimer. Part of the ribosomal stalk of the 50S ribosomal subunit. Forms a multimeric L10(L12)X complex, where L10 forms an elongated spine to which 2 to 4 L12 dimers bind in a sequential fashion. Binds GTP-bound translation factors.

Forms part of the ribosomal stalk which helps the ribosome interact with GTP-bound translation factors. Is thus essential for accurate translation. The chain is Large ribosomal subunit protein bL12 from Chelativorans sp. (strain BNC1).